The sequence spans 253 residues: Negative modulator of initiation of replication (253 aa).

A disordered region spans residues 66–112 (SNQEQQTGHGHAGEPSAVQTPESNDYAKAQPHSSGYQPGQLEGHKSE). The tract at residues 154 to 155 (AV) is interaction with DNA.

Belongs to the SeqA family. In terms of assembly, homodimer. Polymerizes to form helical filaments.

Its subcellular location is the cytoplasm. Its function is as follows. Negative regulator of replication initiation, which contributes to regulation of DNA replication and ensures that replication initiation occurs exactly once per chromosome per cell cycle. Binds to pairs of hemimethylated GATC sequences in the oriC region, thus preventing assembly of replication proteins and re-initiation at newly replicated origins. Repression is relieved when the region becomes fully methylated. The sequence is that of Negative modulator of initiation of replication from Shewanella denitrificans (strain OS217 / ATCC BAA-1090 / DSM 15013).